The sequence spans 384 residues: Putative RNA methyltransferase slr0064 (384 aa).

Residues 53-164 enclose the THUMP domain; sequence LLYRINLWSR…QNHCQLSLDS (112 aa).

Belongs to the methyltransferase superfamily.

The chain is Putative RNA methyltransferase slr0064 from Synechocystis sp. (strain ATCC 27184 / PCC 6803 / Kazusa).